The primary structure comprises 318 residues: tRNA uridine(34) hydroxylase (318 aa).

In terms of domain architecture, Rhodanese spans 125–219; sequence QDPNTVVIDA…YGTSKDTEGK (95 aa). C179 (cysteine persulfide intermediate) is an active-site residue.

The protein belongs to the TrhO family.

The catalysed reaction is uridine(34) in tRNA + AH2 + O2 = 5-hydroxyuridine(34) in tRNA + A + H2O. In terms of biological role, catalyzes oxygen-dependent 5-hydroxyuridine (ho5U) modification at position 34 in tRNAs. This is tRNA uridine(34) hydroxylase from Acholeplasma laidlawii (strain PG-8A).